A 1020-amino-acid polypeptide reads, in one-letter code: Protein translocase subunit SecA (1020 aa).

ATP contacts are provided by residues Gln-99, 117 to 121 (GEGKT), and Asp-633. The tract at residues 963-992 (NEQPSQEMAADEETQEESKIEENKPEPIVV) is disordered. The segment covering 978–987 (EESKIEENKP) has biased composition (basic and acidic residues). Zn(2+) contacts are provided by Cys-1002, Cys-1004, Cys-1013, and Cys-1014.

This sequence belongs to the SecA family. In terms of assembly, monomer and homodimer. Part of the essential Sec protein translocation apparatus which comprises SecA, SecYEG and auxiliary proteins SecDF. Other proteins may also be involved. The cofactor is Zn(2+).

It localises to the cell inner membrane. Its subcellular location is the cytoplasm. The enzyme catalyses ATP + H2O + cellular proteinSide 1 = ADP + phosphate + cellular proteinSide 2.. Part of the Sec protein translocase complex. Interacts with the SecYEG preprotein conducting channel. Has a central role in coupling the hydrolysis of ATP to the transfer of proteins into and across the cell membrane, serving as an ATP-driven molecular motor driving the stepwise translocation of polypeptide chains across the membrane. In Protochlamydia amoebophila (strain UWE25), this protein is Protein translocase subunit SecA.